A 2615-amino-acid chain; its full sequence is Probable serine/threonine-protein kinase roco7 (2615 aa).

The span at 1–13 (MDGYSSLSSSGNS) shows a compositional bias: low complexity. Disordered regions lie at residues 1–35 (MDGYSSLSSSGNSIAPPRPTNNSVGGGSNSNNYNQ), 275–297 (STPTIITSSSSTTTPTNNNNSNN), 533–623 (QNIN…GGLN), and 946–998 (SSSS…ISEQ). Low complexity-rich tracts occupy residues 533–560 (QNINQNNNNNNNQNCNSNTSSPIISSRS), 567–614 (NSST…NNNN), and 946–996 (SSSS…SNIS). Residues 1441–1631 (SVKEAYARNK…LCIWQNGMVL (191 aa)) enclose the COR domain. Residues 1775–2042 (LKFGPQLGSG…ERLSTMQKTF (268 aa)) enclose the Protein kinase domain. Residues 1781 to 1789 (LGSGSYANV) and K1802 each bind ATP. Residue D1899 is the Proton acceptor of the active site. 2 disordered regions span residues 2061–2158 (QINQ…SHSG) and 2176–2209 (GIGSGGNQHQQNGSSTPHSNSQSNSGSSSVYESG). Low complexity-rich tracts occupy residues 2073-2158 (SQAA…SHSG) and 2182-2209 (NQHQQNGSSTPHSNSQSNSGSSSVYESG). WD repeat units lie at residues 2491–2527 (GIIKKRLDGLASRVLSLLILDTYIIGACYDSTILVWD) and 2533–2574 (RMVQ…TTYS).

The protein belongs to the protein kinase superfamily. TKL Ser/Thr protein kinase family. ROCO subfamily.

It carries out the reaction L-seryl-[protein] + ATP = O-phospho-L-seryl-[protein] + ADP + H(+). It catalyses the reaction L-threonyl-[protein] + ATP = O-phospho-L-threonyl-[protein] + ADP + H(+). This Dictyostelium discoideum (Social amoeba) protein is Probable serine/threonine-protein kinase roco7 (roco7).